The chain runs to 30 residues: Proteinase inhibitor CeKI (30 aa).

This sequence belongs to the protease inhibitor I3 (leguminous Kunitz-type inhibitor) family.

Its function is as follows. Potent inhibitor of serine proteases plasma kallikrein, plasmin and coagulation factor XIIa. Weak inhibitor of serine proteases trypsin and coagulation factor Xa. Does not inhibit the serine proteases chymotrypsin, elastase or thrombin. Inhibits kinin release from HMW-kininogen by kallikrein in vitro. The polypeptide is Proteinase inhibitor CeKI (Paubrasilia echinata (Pau Brasil)).